An 88-amino-acid chain; its full sequence is Protein K3 (88 aa).

One can recognise an S1 motif domain in the interval 8–82; that stretch reads LPNAGDVIKG…TKGYIDVNYK (75 aa). Binding to host EIF2AK2/PKR stretches follow at residues 43–53 and 74–79; these read SVKMHMDRYVE and KGYIDV.

Belongs to the poxviridae K3 protein family. In terms of assembly, interacts with host EIF2AK2/PKR kinase.

Viral mimic of EIF2S1/eIF-2alpha that acts as a pseudosubstrate for EIF2AK2/PKR kinase. Inhibits therefore EIF2S1/eIF-2alpha phosphorylation by host EIF2AK2/PKR kinase and prevents protein synthesis shutoff. Determinant of host species specificity. This chain is Protein K3, found in Vaccinia virus (strain Western Reserve) (VACV).